The primary structure comprises 579 residues: Acyl-coenzyme A synthetase ACSM5, mitochondrial (579 aa).

A mitochondrion-targeting transit peptide spans 1-26 (MRPWLRHLVLQALRNSRAFCGSHGKP). K97 is modified (N6-acetyllysine; alternate). Position 97 is an N6-succinyllysine; alternate (K97). Residue K152 is modified to N6-acetyllysine. 230–238 (TSGTTGAPK) is a binding site for ATP. K303 carries the post-translational modification N6-acetyllysine; alternate. Residue K303 is modified to N6-succinyllysine; alternate. ATP contacts are provided by residues 368–373 (EGYGQS), D455, R470, and K566.

This sequence belongs to the ATP-dependent AMP-binding enzyme family. Requires Mg(2+) as cofactor. Mn(2+) serves as cofactor. As to expression, detected in kidney and liver.

It is found in the mitochondrion matrix. The enzyme catalyses a medium-chain fatty acid + ATP + CoA = a medium-chain fatty acyl-CoA + AMP + diphosphate. Its function is as follows. Catalyzes the activation of fatty acids by CoA to produce an acyl-CoA, the first step in fatty acid metabolism. The sequence is that of Acyl-coenzyme A synthetase ACSM5, mitochondrial (ACSM5) from Homo sapiens (Human).